We begin with the raw amino-acid sequence, 188 residues long: dCTP deaminase (188 aa).

Residues 111-116 (KSTYAR), 135-137 (TLE), Gln156, Tyr170, and Gln180 contribute to the dCTP site. The Proton donor/acceptor role is filled by Glu137.

Belongs to the dCTP deaminase family. Homotrimer.

The enzyme catalyses dCTP + H2O + H(+) = dUTP + NH4(+). The protein operates within pyrimidine metabolism; dUMP biosynthesis; dUMP from dCTP (dUTP route): step 1/2. Catalyzes the deamination of dCTP to dUTP. The polypeptide is dCTP deaminase (Coxiella burnetii (strain CbuK_Q154) (Coxiella burnetii (strain Q154))).